Here is an 81-residue protein sequence, read N- to C-terminus: ATP synthase subunit C, plastid (81 aa).

The next 2 helical transmembrane spans lie at 3–23 (PLIP…ASIG) and 61–81 (EALT…NPFI).

This sequence belongs to the ATPase C chain family. F-type ATPases have 2 components, F(1) - the catalytic core - and F(0) - the membrane proton channel. F(1) has five subunits: alpha(3), beta(3), gamma(1), delta(1), epsilon(1). F(0) has four main subunits: a(1), b(1), b'(1) and c(10-14). The alpha and beta chains form an alternating ring which encloses part of the gamma chain. F(1) is attached to F(0) by a central stalk formed by the gamma and epsilon chains, while a peripheral stalk is formed by the delta, b and b' chains.

The protein resides in the plastid membrane. In terms of biological role, f(1)F(0) ATP synthase produces ATP from ADP in the presence of a proton or sodium gradient. F-type ATPases consist of two structural domains, F(1) containing the extramembraneous catalytic core and F(0) containing the membrane proton channel, linked together by a central stalk and a peripheral stalk. During catalysis, ATP synthesis in the catalytic domain of F(1) is coupled via a rotary mechanism of the central stalk subunits to proton translocation. Its function is as follows. Key component of the F(0) channel; it plays a direct role in translocation across the membrane. A homomeric c-ring of between 10-14 subunits forms the central stalk rotor element with the F(1) delta and epsilon subunits. The polypeptide is ATP synthase subunit C, plastid (Aneura mirabilis (Parasitic liverwort)).